The primary structure comprises 528 residues: Phosphoenolpyruvate carboxykinase (ATP) (528 aa).

Substrate is bound by residues R56, Y192, and K198. ATP contacts are provided by residues K198, H217, and 233–241 (GLSGTGKTT). K198 and H217 together coordinate Mn(2+). D254 serves as a coordination point for Mn(2+). Residues E282, R319, and T444 each coordinate ATP. A substrate-binding site is contributed by R319.

The protein belongs to the phosphoenolpyruvate carboxykinase (ATP) family. The cofactor is Mn(2+).

It is found in the cytoplasm. The enzyme catalyses oxaloacetate + ATP = phosphoenolpyruvate + ADP + CO2. The protein operates within carbohydrate biosynthesis; gluconeogenesis. Functionally, involved in the gluconeogenesis. Catalyzes the conversion of oxaloacetate (OAA) to phosphoenolpyruvate (PEP) through direct phosphoryl transfer between the nucleoside triphosphate and OAA. This chain is Phosphoenolpyruvate carboxykinase (ATP), found in Bacillus cytotoxicus (strain DSM 22905 / CIP 110041 / 391-98 / NVH 391-98).